Here is a 309-residue protein sequence, read N- to C-terminus: Homoserine O-succinyltransferase (309 aa).

Residue Cys-142 is the Acyl-thioester intermediate of the active site. Positions 163 and 192 each coordinate substrate. His-235 serves as the catalytic Proton acceptor. Glu-237 is a catalytic residue. Position 249 (Arg-249) interacts with substrate.

This sequence belongs to the MetA family. In terms of assembly, homodimer.

It is found in the cytoplasm. The catalysed reaction is L-homoserine + succinyl-CoA = O-succinyl-L-homoserine + CoA. It functions in the pathway amino-acid biosynthesis; L-methionine biosynthesis via de novo pathway; O-succinyl-L-homoserine from L-homoserine: step 1/1. In terms of biological role, transfers a succinyl group from succinyl-CoA to L-homoserine, forming succinyl-L-homoserine. In Salmonella choleraesuis (strain SC-B67), this protein is Homoserine O-succinyltransferase.